Here is a 194-residue protein sequence, read N- to C-terminus: Inosine triphosphate pyrophosphatase (194 aa).

11-16 (TGNAKK) is an ITP binding site. Mg(2+) is bound at residue E39. ITP contacts are provided by residues K51, 67–68 (DT), K84, 143–146 (FGWD), K166, and 171–172 (HR).

This sequence belongs to the HAM1 NTPase family. As to quaternary structure, homodimer. The cofactor is Mg(2+). It depends on Mn(2+) as a cofactor.

It localises to the cytoplasm. The catalysed reaction is ITP + H2O = IMP + diphosphate + H(+). It carries out the reaction dITP + H2O = dIMP + diphosphate + H(+). The enzyme catalyses XTP + H2O = XMP + diphosphate + H(+). In terms of biological role, pyrophosphatase that hydrolyzes non-canonical purine nucleotides such as inosine triphosphate (ITP), deoxyinosine triphosphate (dITP) or xanthosine 5'-triphosphate (XTP) to their respective monophosphate derivatives. The enzyme does not distinguish between the deoxy- and ribose forms. Probably excludes non-canonical purines from RNA and DNA precursor pools, thus preventing their incorporation into RNA and DNA and avoiding chromosomal lesions. The protein is Inosine triphosphate pyrophosphatase (itpa) of Dictyostelium discoideum (Social amoeba).